The primary structure comprises 118 residues: Ribulose bisphosphate carboxylase small subunit 2 (118 aa).

It belongs to the RuBisCO small chain family. As to quaternary structure, heterohexadecamer of 8 large and 8 small subunits.

In terms of biological role, ruBisCO catalyzes two reactions: the carboxylation of D-ribulose 1,5-bisphosphate, the primary event in carbon dioxide fixation, as well as the oxidative fragmentation of the pentose substrate. Both reactions occur simultaneously and in competition at the same active site. Although the small subunit is not catalytic it is essential for maximal activity. This chain is Ribulose bisphosphate carboxylase small subunit 2, found in Acidithiobacillus ferrooxidans (Thiobacillus ferrooxidans).